The primary structure comprises 88 residues: Apolipoprotein C-I (88 aa).

The N-terminal stretch at 1-26 is a signal peptide; the sequence is MRLFLSLPVLVVVLAMVLEGPAPTQA.

Belongs to the apolipoprotein C1 family.

Its subcellular location is the secreted. Its function is as follows. Inhibitor of lipoprotein binding to the low density lipoprotein (LDL) receptor, LDL receptor-related protein, and very low density lipoprotein (VLDL) receptor. Associates with high density lipoproteins (HDL) and the triacylglycerol-rich lipoproteins in the plasma and makes up about 10% of the protein of the VLDL and 2% of that of HDL. Appears to interfere directly with fatty acid uptake and is also the major plasma inhibitor of cholesteryl ester transfer protein (CETP). Binds free fatty acids and reduces their intracellular esterification. Modulates the interaction of APOE with beta-migrating VLDL and inhibits binding of beta-VLDL to the LDL receptor-related protein. The sequence is that of Apolipoprotein C-I (APOC1) from Phoca vitulina (Harbor seal).